We begin with the raw amino-acid sequence, 156 residues long: Small ribosomal subunit protein uS7 (156 aa).

It belongs to the universal ribosomal protein uS7 family. In terms of assembly, part of the 30S ribosomal subunit. Contacts proteins S9 and S11.

One of the primary rRNA binding proteins, it binds directly to 16S rRNA where it nucleates assembly of the head domain of the 30S subunit. Is located at the subunit interface close to the decoding center, probably blocks exit of the E-site tRNA. In Shouchella clausii (strain KSM-K16) (Alkalihalobacillus clausii), this protein is Small ribosomal subunit protein uS7.